The sequence spans 416 residues: Lipoyl synthase, mitochondrial (416 aa).

The N-terminal 33 residues, 1–33 (MAAPTRSLRRLSSFRTTISPSLTVTAPIGCRSY), are a transit peptide targeting the mitochondrion. 7 residues coordinate [4Fe-4S] cluster: Cys-132, Cys-137, Cys-143, Cys-163, Cys-167, Cys-170, and Ser-378. The 220-residue stretch at 148–367 (DKSSATATIM…RQRALDMGFL (220 aa)) folds into the Radical SAM core domain. The interval 396–416 (GSGTAERTVDQTAATTDEATR) is disordered. Over residues 405 to 416 (DQTAATTDEATR) the composition is skewed to polar residues.

This sequence belongs to the radical SAM superfamily. Lipoyl synthase family. It depends on [4Fe-4S] cluster as a cofactor.

Its subcellular location is the mitochondrion. It carries out the reaction [[Fe-S] cluster scaffold protein carrying a second [4Fe-4S](2+) cluster] + N(6)-octanoyl-L-lysyl-[protein] + 2 oxidized [2Fe-2S]-[ferredoxin] + 2 S-adenosyl-L-methionine + 4 H(+) = [[Fe-S] cluster scaffold protein] + N(6)-[(R)-dihydrolipoyl]-L-lysyl-[protein] + 4 Fe(3+) + 2 hydrogen sulfide + 2 5'-deoxyadenosine + 2 L-methionine + 2 reduced [2Fe-2S]-[ferredoxin]. The protein operates within protein modification; protein lipoylation via endogenous pathway; protein N(6)-(lipoyl)lysine from octanoyl-[acyl-carrier-protein]: step 2/2. Its function is as follows. Catalyzes the radical-mediated insertion of two sulfur atoms into the C-6 and C-8 positions of the octanoyl moiety bound to the lipoyl domains of lipoate-dependent enzymes, thereby converting the octanoylated domains into lipoylated derivatives. This Penicillium rubens (strain ATCC 28089 / DSM 1075 / NRRL 1951 / Wisconsin 54-1255) (Penicillium chrysogenum) protein is Lipoyl synthase, mitochondrial.